A 262-amino-acid polypeptide reads, in one-letter code: Acyl-[acyl-carrier-protein]--UDP-N-acetylglucosamine O-acyltransferase (262 aa).

The protein belongs to the transferase hexapeptide repeat family. LpxA subfamily. Homotrimer.

The protein resides in the cytoplasm. It catalyses the reaction a (3R)-hydroxyacyl-[ACP] + UDP-N-acetyl-alpha-D-glucosamine = a UDP-3-O-[(3R)-3-hydroxyacyl]-N-acetyl-alpha-D-glucosamine + holo-[ACP]. It participates in glycolipid biosynthesis; lipid IV(A) biosynthesis; lipid IV(A) from (3R)-3-hydroxytetradecanoyl-[acyl-carrier-protein] and UDP-N-acetyl-alpha-D-glucosamine: step 1/6. Involved in the biosynthesis of lipid A, a phosphorylated glycolipid that anchors the lipopolysaccharide to the outer membrane of the cell. The chain is Acyl-[acyl-carrier-protein]--UDP-N-acetylglucosamine O-acyltransferase from Paracidovorax citrulli (strain AAC00-1) (Acidovorax citrulli).